A 166-amino-acid polypeptide reads, in one-letter code: 3-hydroxyacyl-[acyl-carrier-protein] dehydratase FabZ (166 aa).

The active site involves His72.

Belongs to the thioester dehydratase family. FabZ subfamily.

The protein localises to the cytoplasm. It catalyses the reaction a (3R)-hydroxyacyl-[ACP] = a (2E)-enoyl-[ACP] + H2O. Involved in unsaturated fatty acids biosynthesis. Catalyzes the dehydration of short chain beta-hydroxyacyl-ACPs and long chain saturated and unsaturated beta-hydroxyacyl-ACPs. This chain is 3-hydroxyacyl-[acyl-carrier-protein] dehydratase FabZ, found in Synechococcus sp. (strain JA-2-3B'a(2-13)) (Cyanobacteria bacterium Yellowstone B-Prime).